The primary structure comprises 206 residues: Putative cryptic phosphonate transport system permease protein PhnE1 (206 aa).

3 consecutive transmembrane segments (helical) span residues 30 to 50 (WFSLLSWAVVLAVLVVSWQGA), 92 to 112 (IAVWGTALAVVLSIPFGLMSA), and 137 to 157 (MVFAMLFVVAVGLGPFAGVLA).

If the reading frame is restored, the complex is composed of two ATP-binding proteins (PhnC), two transmembrane proteins (PhnE) and a solute-binding protein (PhnD).

It localises to the cell inner membrane. N-terminal fragment of the PhnE protein, part of a phosphonate usage operon that is cryptic in K12 strains. Growth of K12 strains on phosphonate can be observed when it is used as the sole phosphorus source after a 60 hour lag period, suggesting the operon is activated. An intact PhnE in strain B is (AC A0A140NFA3). Part of the binding-protein-dependent transport system for phosphonates; probably responsible for the translocation of the substrate across the membrane. This Escherichia coli (strain K12) protein is Putative cryptic phosphonate transport system permease protein PhnE1 (phnE1).